A 267-amino-acid chain; its full sequence is L-aspartate dehydrogenase (267 aa).

Positions 124 and 190 each coordinate NAD(+). Residue His220 is part of the active site.

It belongs to the L-aspartate dehydrogenase family.

The enzyme catalyses L-aspartate + NADP(+) + H2O = oxaloacetate + NH4(+) + NADPH + H(+). It catalyses the reaction L-aspartate + NAD(+) + H2O = oxaloacetate + NH4(+) + NADH + H(+). Its pathway is cofactor biosynthesis; NAD(+) biosynthesis; iminoaspartate from L-aspartate (dehydrogenase route): step 1/1. Functionally, specifically catalyzes the NAD or NADP-dependent dehydrogenation of L-aspartate to iminoaspartate. The protein is L-aspartate dehydrogenase of Pseudomonas aeruginosa (strain ATCC 15692 / DSM 22644 / CIP 104116 / JCM 14847 / LMG 12228 / 1C / PRS 101 / PAO1).